We begin with the raw amino-acid sequence, 132 residues long: Small ribosomal subunit protein uS8 (132 aa).

It belongs to the universal ribosomal protein uS8 family. As to quaternary structure, part of the 30S ribosomal subunit. Contacts proteins S5 and S12.

Functionally, one of the primary rRNA binding proteins, it binds directly to 16S rRNA central domain where it helps coordinate assembly of the platform of the 30S subunit. This chain is Small ribosomal subunit protein uS8, found in Mycobacterium sp. (strain KMS).